Reading from the N-terminus, the 225-residue chain is MPVTPQQPSGHTEGLPEPTAEAAVWVVIPCGPCIPIMLGLASLTAFFIITTAVLAERLFRRPQPDPSQRAPTLVWRPGGELWIEPTSSARERSEDWYGSSMPLLMDRAPGPPTPGGTLEGRATAPPATSAPYSSLSSLVPQTPPEVPAQSTFWRPQTQEERPHDTSLVSWVGSEPMPEAGLQVGSPRPWRPRQGSLEPDWGLQPRVTLEQISAFWKREGRTSVGF.

A helical transmembrane segment spans residues 32-52 (PCIPIMLGLASLTAFFIITTA). 2 disordered regions span residues 106–163 (DRAP…ERPH) and 178–200 (EAGL…EPDW). Phosphothreonine is present on residues Thr113 and Thr117. The span at 122–140 (ATAPPATSAPYSSLSSLVP) shows a compositional bias: low complexity. Ser195 bears the Phosphoserine mark.

It localises to the membrane. In Mus musculus (Mouse), this protein is Transmembrane protein C16orf54 homolog.